A 424-amino-acid chain; its full sequence is Protein pellino (424 aa).

The interval 1-21 (MVKRTDGTESPILAEDGGDGH) is disordered. Position 10 is a phosphoserine (Ser10).

Belongs to the pellino family. Interacts with pll.

Its function is as follows. Scaffold protein involved in the Toll signaling pathway via its interaction with pelle/pll kinase. The chain is Protein pellino (Pli) from Drosophila melanogaster (Fruit fly).